The sequence spans 70 residues: Large ribosomal subunit protein eL38 (70 aa).

Lys-4 participates in a covalent cross-link: Glycyl lysine isopeptide (Lys-Gly) (interchain with G-Cter in SUMO2). Lys-9 is modified (N6-acetyllysine; alternate). Lys-9 is covalently cross-linked (Glycyl lysine isopeptide (Lys-Gly) (interchain with G-Cter in SUMO2); alternate). An N6-acetyllysine modification is found at Lys-67.

This sequence belongs to the eukaryotic ribosomal protein eL38 family. As to quaternary structure, component of the large ribosomal subunit.

It is found in the cytoplasm. In terms of biological role, component of the large ribosomal subunit. The ribosome is a large ribonucleoprotein complex responsible for the synthesis of proteins in the cell. The chain is Large ribosomal subunit protein eL38 (RPL38) from Homo sapiens (Human).